We begin with the raw amino-acid sequence, 564 residues long: 4-hydroxybutyrate--CoA ligase 1 (564 aa).

A helical transmembrane segment spans residues 105–125 (VHPMHWAVFLAVIKGGFVMVP). Residues 204-212 (TSGTTGMPK), 343-348 (DFYGQT), aspartate 429, and arginine 444 contribute to the ATP site. Threonine 348 serves as a coordination point for substrate. 452–454 (SDY) provides a ligand contact to CoA. Arginine 455 is a substrate binding site. Residues arginine 484, lysine 513, and 521–523 (VPR) each bind CoA. Position 538 (lysine 538) interacts with ATP.

It belongs to the ATP-dependent AMP-binding enzyme family. It depends on Mg(2+) as a cofactor. Mn(2+) is required as a cofactor.

It localises to the membrane. It catalyses the reaction 4-hydroxybutanoate + ATP + CoA = 4-hydroxybutanoyl-CoA + AMP + diphosphate. The enzyme catalyses acetate + ATP + CoA = acetyl-CoA + AMP + diphosphate. It carries out the reaction propanoate + ATP + CoA = propanoyl-CoA + AMP + diphosphate. The catalysed reaction is a medium-chain fatty acid + ATP + CoA = a medium-chain fatty acyl-CoA + AMP + diphosphate. Functionally, involved in the 3-hydroxypropionate/4-hydroxybutyrate cycle which incorporates carbon dioxide into cellular carbon. Catalyzes the ligation of coenzyme A (CoA) to 4-hydroxybutyrate (4HB). It can also use butyrate, valerate, propionate, acetate and 3-hydroxybutyrate (3HB) as substrates. In Metallosphaera sedula (strain ATCC 51363 / DSM 5348 / JCM 9185 / NBRC 15509 / TH2), this protein is 4-hydroxybutyrate--CoA ligase 1.